The primary structure comprises 177 residues: tRNA-splicing endonuclease (177 aa).

Catalysis depends on residues Y114, H123, and K154.

It belongs to the tRNA-intron endonuclease family. Archaeal short subfamily. Homotetramer; although the tetramer contains four active sites, only two participate in the cleavage. Therefore, it should be considered as a dimer of dimers.

The enzyme catalyses pretRNA = a 3'-half-tRNA molecule with a 5'-OH end + a 5'-half-tRNA molecule with a 2',3'-cyclic phosphate end + an intron with a 2',3'-cyclic phosphate and a 5'-hydroxyl terminus.. In terms of biological role, endonuclease that removes tRNA introns. Cleaves pre-tRNA at the 5'- and 3'-splice sites to release the intron. The products are an intron and two tRNA half-molecules bearing 2',3' cyclic phosphate and 5'-OH termini. Recognizes a pseudosymmetric substrate in which 2 bulged loops of 3 bases are separated by a stem of 4 bp. The chain is tRNA-splicing endonuclease from Methanococcus maripaludis (strain DSM 14266 / JCM 13030 / NBRC 101832 / S2 / LL).